The sequence spans 429 residues: Gamma-glutamyl phosphate reductase (429 aa).

It belongs to the gamma-glutamyl phosphate reductase family.

The protein localises to the cytoplasm. It carries out the reaction L-glutamate 5-semialdehyde + phosphate + NADP(+) = L-glutamyl 5-phosphate + NADPH + H(+). The protein operates within amino-acid biosynthesis; L-proline biosynthesis; L-glutamate 5-semialdehyde from L-glutamate: step 2/2. Functionally, catalyzes the NADPH-dependent reduction of L-glutamate 5-phosphate into L-glutamate 5-semialdehyde and phosphate. The product spontaneously undergoes cyclization to form 1-pyrroline-5-carboxylate. In Nocardioides sp. (strain ATCC BAA-499 / JS614), this protein is Gamma-glutamyl phosphate reductase.